The sequence spans 363 residues: Carbamoyl phosphate synthase small chain (363 aa).

The segment at 1 to 172 is CPSase; sequence MTKRILMLED…AFASPGDGKR (172 aa). The L-glutamine site is built by S46, G220, and G222. The region spanning 172–359 is the Glutamine amidotransferase type-1 domain; it reads RVVLVDYGVK…MEMMNGKEEG (188 aa). C247 functions as the Nucleophile in the catalytic mechanism. L-glutamine-binding residues include L248, Q251, N289, G291, and Y292. Active-site residues include H332 and E334.

This sequence belongs to the CarA family. As to quaternary structure, composed of two chains; the small (or glutamine) chain promotes the hydrolysis of glutamine to ammonia, which is used by the large (or ammonia) chain to synthesize carbamoyl phosphate. Tetramer of heterodimers (alpha,beta)4.

It catalyses the reaction hydrogencarbonate + L-glutamine + 2 ATP + H2O = carbamoyl phosphate + L-glutamate + 2 ADP + phosphate + 2 H(+). The enzyme catalyses L-glutamine + H2O = L-glutamate + NH4(+). It functions in the pathway amino-acid biosynthesis; L-arginine biosynthesis; carbamoyl phosphate from bicarbonate: step 1/1. The protein operates within pyrimidine metabolism; UMP biosynthesis via de novo pathway; (S)-dihydroorotate from bicarbonate: step 1/3. Functionally, small subunit of the glutamine-dependent carbamoyl phosphate synthetase (CPSase). CPSase catalyzes the formation of carbamoyl phosphate from the ammonia moiety of glutamine, carbonate, and phosphate donated by ATP, constituting the first step of 2 biosynthetic pathways, one leading to arginine and/or urea and the other to pyrimidine nucleotides. The small subunit (glutamine amidotransferase) binds and cleaves glutamine to supply the large subunit with the substrate ammonia. In Listeria monocytogenes serotype 4b (strain F2365), this protein is Carbamoyl phosphate synthase small chain.